The chain runs to 335 residues: Galactinol synthase 2 (335 aa).

K103 is a catalytic residue. The Mn(2+) site is built by D119, D121, and H257.

It belongs to the glycosyltransferase 8 family. Galactosyltransferase subfamily. A divalent metal cation serves as cofactor. Accumulates in mature seeds.

The protein resides in the cytoplasm. The enzyme catalyses myo-inositol + UDP-alpha-D-galactose = alpha-D-galactosyl-(1-&gt;3)-1D-myo-inositol + UDP + H(+). Its function is as follows. Galactinol synthase involved in the biosynthesis of raffinose family oligosaccharides (RFOs) that function as osmoprotectants. Promotes stress tolerance of factors such as drought, chilling, salinity and methylviologen (MV), a superoxide radical generating drug, by mediating an increase in levels of the endogenous osmoprotective compounds, galactinol and raffinose. The chain is Galactinol synthase 2 (GOLS2) from Arabidopsis thaliana (Mouse-ear cress).